Reading from the N-terminus, the 44-residue chain is DKLIGSCVWGAVNYTSNCNAECKRRGYKGGHCGSFANVNCWCET.

Intrachain disulfides connect Cys-7–Cys-32, Cys-18–Cys-40, and Cys-22–Cys-42.

Its subcellular location is the secreted. Possesses potent anti-fungal activity. In Archaeoprepona demophon (One-spotted leafwing butterfly), this protein is Defensin ARD1.